Here is a 103-residue protein sequence, read N- to C-terminus: NADH-quinone oxidoreductase subunit K (103 aa).

3 helical membrane-spanning segments follow: residues 7–27 (TEHGLYLAAALFILGLIGVLV), 31–51 (LIFMLLSLEIMLNATGLAFIV), and 65–85 (FMLILTLAAAEAAVALALILL).

The protein belongs to the complex I subunit 4L family. As to quaternary structure, NDH-1 is composed of 14 different subunits. Subunits NuoA, H, J, K, L, M, N constitute the membrane sector of the complex.

The protein localises to the cell inner membrane. The enzyme catalyses a quinone + NADH + 5 H(+)(in) = a quinol + NAD(+) + 4 H(+)(out). NDH-1 shuttles electrons from NADH, via FMN and iron-sulfur (Fe-S) centers, to quinones in the respiratory chain. The immediate electron acceptor for the enzyme in this species is believed to be ubiquinone. Couples the redox reaction to proton translocation (for every two electrons transferred, four hydrogen ions are translocated across the cytoplasmic membrane), and thus conserves the redox energy in a proton gradient. The chain is NADH-quinone oxidoreductase subunit K from Nitrosococcus oceani (strain ATCC 19707 / BCRC 17464 / JCM 30415 / NCIMB 11848 / C-107).